A 264-amino-acid polypeptide reads, in one-letter code: Carbonic anhydrase (264 aa).

The tat-type signal signal peptide spans 1 to 33; sequence MSSTLYRRQLLKLLGMSVLGTSFSSCVTSPARA. The Alpha-carbonic anhydrase domain occupies 36–264; sequence VNWGYIGKVG…LNDRLVIEAI (229 aa). Zn(2+) is bound by residues H127, H129, and H146. Residue 214–215 participates in substrate binding; the sequence is TT.

The protein belongs to the alpha-carbonic anhydrase family. Zn(2+) serves as cofactor. In terms of processing, predicted to be exported by the Tat system. The position of the signal peptide cleavage has not been experimentally proven.

It carries out the reaction hydrogencarbonate + H(+) = CO2 + H2O. Reversible hydration of carbon dioxide. The polypeptide is Carbonic anhydrase (ecaA) (Nostoc sp. (strain PCC 7120 / SAG 25.82 / UTEX 2576)).